The following is a 168-amino-acid chain: Ubiquitin-conjugating enzyme E2 2 (168 aa).

The region spanning 4 to 150 is the UBC core domain; sequence PAKRRLMRDF…VRETVENSWN (147 aa). Cysteine 88 serves as the catalytic Glycyl thioester intermediate. The disordered stretch occupies residues 143 to 168; the sequence is ETVENSWNEDDEDEDEDEDEDIDDAE. The segment covering 149 to 168 has biased composition (acidic residues); the sequence is WNEDDEDEDEDEDEDIDDAE.

This sequence belongs to the ubiquitin-conjugating enzyme family.

The protein resides in the cytoplasm. The protein localises to the nucleus. It catalyses the reaction S-ubiquitinyl-[E1 ubiquitin-activating enzyme]-L-cysteine + [E2 ubiquitin-conjugating enzyme]-L-cysteine = [E1 ubiquitin-activating enzyme]-L-cysteine + S-ubiquitinyl-[E2 ubiquitin-conjugating enzyme]-L-cysteine.. Its pathway is protein modification; protein ubiquitination. Catalyzes the covalent attachment of ubiquitin to other proteins. Plays a role in transcription regulation by catalyzing the monoubiquitination of histone H2B to form H2BK123ub1. H2BK123ub1 gives a specific tag for epigenetic transcriptional activation and is also a prerequisite for H3K4me and H3K79me formation. Also involved in postreplication repair of UV-damaged DNA, in N-end rule-dependent protein degradation and in sporulation. The chain is Ubiquitin-conjugating enzyme E2 2 (UBC2) from Debaryomyces hansenii (strain ATCC 36239 / CBS 767 / BCRC 21394 / JCM 1990 / NBRC 0083 / IGC 2968) (Yeast).